Here is a 167-residue protein sequence, read N- to C-terminus: MTENRKKKVATVKTISKLIKNSAGLIVFEYQGLSASELESVRNDLKNHLANTMVFKNRFVKLAIDKAGFKELDSYLFGPNIFVFFDEEHKNATIKKIAEIEKKNKFVKIKAGIYEEKVVSDAEVRVIATLPTYEEALTILARSMLAPLQQVSLGLKMLVDEKHIKAE.

The protein belongs to the universal ribosomal protein uL10 family. Part of the ribosomal stalk of the 50S ribosomal subunit. The N-terminus interacts with L11 and the large rRNA to form the base of the stalk. The C-terminus forms an elongated spine to which L12 dimers bind in a sequential fashion forming a multimeric L10(L12)X complex.

Forms part of the ribosomal stalk, playing a central role in the interaction of the ribosome with GTP-bound translation factors. The chain is Large ribosomal subunit protein uL10 from Mycoplasma mobile (strain ATCC 43663 / 163K / NCTC 11711) (Mesomycoplasma mobile).